A 139-amino-acid chain; its full sequence is MVERTFSIIKPDAVERNLQGEVLAMIQGAGLKVVAMKMIHLTKAQAEGFYAVHRERPFFDSLTTYMCSGPVVCSVLEGENAISRYREIMGATNPANAAEGTIRKKYAVSLEANSVHGSDAPETAAFEISYFFNALEIVG.

ATP is bound by residues Lys10, Phe58, Arg86, Thr92, Arg103, and Asn113. His116 serves as the catalytic Pros-phosphohistidine intermediate.

The protein belongs to the NDK family. In terms of assembly, homotetramer. It depends on Mg(2+) as a cofactor.

It localises to the cytoplasm. It carries out the reaction a 2'-deoxyribonucleoside 5'-diphosphate + ATP = a 2'-deoxyribonucleoside 5'-triphosphate + ADP. The enzyme catalyses a ribonucleoside 5'-diphosphate + ATP = a ribonucleoside 5'-triphosphate + ADP. Its function is as follows. Major role in the synthesis of nucleoside triphosphates other than ATP. The ATP gamma phosphate is transferred to the NDP beta phosphate via a ping-pong mechanism, using a phosphorylated active-site intermediate. This is Nucleoside diphosphate kinase from Nitratidesulfovibrio vulgaris (strain ATCC 29579 / DSM 644 / CCUG 34227 / NCIMB 8303 / VKM B-1760 / Hildenborough) (Desulfovibrio vulgaris).